A 300-amino-acid chain; its full sequence is Protein YIF1B-B (300 aa).

Residues 1–46 are disordered; that stretch reads MNQESSFRAPPKRRVRGSNPNISNPHQLFDDTSGGPVPHGGDFPNH. Topologically, residues 1–142 are cytoplasmic; the sequence is MNQESSFRAP…APRFDINAPD (142 aa). The helical transmembrane segment at 143 to 163 threads the bilayer; the sequence is LYIPVMAFITYILVAGLALGT. Over 164–178 the chain is Extracellular; the sequence is QSRFSPEILGMQASS. The chain crosses the membrane as a helical span at residues 179-199; that stretch reads ALAWLIVEVLAILLSLYLVTV. Residues 200 to 205 are Cytoplasmic-facing; that stretch reads NTDLTT. A helical transmembrane segment spans residues 206–226; sequence VDLVAFSGYKYVGMISGVIAG. Position 227 (Leu-227) is a topological domain, extracellular. Residues 228 to 248 traverse the membrane as a helical segment; the sequence is LFGNTGYYVVLAWCCISIVFF. Topologically, residues 249 to 278 are cytoplasmic; sequence MIRTLRLKILSEAAAEGVLVRGARNQLRMY. Residues 279-299 traverse the membrane as a helical segment; that stretch reads LTMAIAAVQPIFMYWLTYHLV. Residue Arg-300 is a topological domain, extracellular.

This sequence belongs to the YIF1 family.

The protein localises to the endoplasmic reticulum membrane. The protein resides in the golgi apparatus membrane. Its subcellular location is the endoplasmic reticulum-Golgi intermediate compartment membrane. Functionally, functions in endoplasmic reticulum to Golgi vesicle-mediated transport and regulates the proper organization of the endoplasmic reticulum and the Golgi. Plays a key role in targeting to neuronal dendrites receptors such as HTR1A. Plays also a role in primary cilium and sperm flagellum assembly probably through protein transport to these compartments. This Xenopus laevis (African clawed frog) protein is Protein YIF1B-B (yif1b-b).